A 120-amino-acid polypeptide reads, in one-letter code: FK506-binding protein 1A (120 aa).

A PPIase FKBP-type domain is found at 26-114; it reads GDNVDVHYKG…IFETELVGIK (89 aa).

This sequence belongs to the FKBP-type PPIase family. FKBP1 subfamily.

It is found in the cytoplasm. The catalysed reaction is [protein]-peptidylproline (omega=180) = [protein]-peptidylproline (omega=0). In terms of biological role, PPIases accelerate the folding of proteins. It catalyzes the cis-trans isomerization of proline imidic peptide bonds in oligopeptides. This Neurospora crassa (strain ATCC 24698 / 74-OR23-1A / CBS 708.71 / DSM 1257 / FGSC 987) protein is FK506-binding protein 1A (fkr-2).